The sequence spans 430 residues: Adenylosuccinate synthetase (430 aa).

Residues 12–18 (GDEGKGK) and 40–42 (GHT) contribute to the GTP site. Aspartate 13 functions as the Proton acceptor in the catalytic mechanism. Mg(2+) contacts are provided by aspartate 13 and glycine 40. Residues 13–16 (DEGK), 38–41 (NAGH), threonine 130, arginine 144, glutamine 225, threonine 240, and arginine 304 each bind IMP. The Proton donor role is filled by histidine 41. Residue 300–306 (STTGRPR) participates in substrate binding. GTP is bound by residues arginine 306, 332-334 (KLD), and 414-416 (SVG).

The protein belongs to the adenylosuccinate synthetase family. In terms of assembly, homodimer. Mg(2+) is required as a cofactor.

Its subcellular location is the cytoplasm. The enzyme catalyses IMP + L-aspartate + GTP = N(6)-(1,2-dicarboxyethyl)-AMP + GDP + phosphate + 2 H(+). Its pathway is purine metabolism; AMP biosynthesis via de novo pathway; AMP from IMP: step 1/2. Plays an important role in the de novo pathway of purine nucleotide biosynthesis. Catalyzes the first committed step in the biosynthesis of AMP from IMP. The sequence is that of Adenylosuccinate synthetase from Pelobacter propionicus (strain DSM 2379 / NBRC 103807 / OttBd1).